Here is a 230-residue protein sequence, read N- to C-terminus: Cytidylate kinase (230 aa).

12–20 (GPSGAGKGT) serves as a coordination point for ATP.

The protein belongs to the cytidylate kinase family. Type 1 subfamily.

It is found in the cytoplasm. The enzyme catalyses CMP + ATP = CDP + ADP. The catalysed reaction is dCMP + ATP = dCDP + ADP. The sequence is that of Cytidylate kinase from Shewanella sp. (strain MR-7).